The chain runs to 239 residues: MRYTVITLFPNLVRPWLEESLLKKALERGLIRVEVVDLRAFGLGRHRTVDDTPYGGGAGMVIRPDVAVAALERALPADEVVLLSPAGRPFTQKVAEELAGKEHLVLLAGRYEGFDARVEAFATRILSIGDYVLMGGEVAALAVLEATARLVPGVIGDPQSHREDSFVRGLLDYPQYTRPPEFRGLRVPEVLLSGHHQEVERWRRQEALRRTLALRPELVARAPLSLLEARLLAEMDREE.

S-adenosyl-L-methionine-binding positions include glycine 109 and isoleucine 128 to leucine 133.

This sequence belongs to the RNA methyltransferase TrmD family. In terms of assembly, homodimer.

Its subcellular location is the cytoplasm. It catalyses the reaction guanosine(37) in tRNA + S-adenosyl-L-methionine = N(1)-methylguanosine(37) in tRNA + S-adenosyl-L-homocysteine + H(+). In terms of biological role, specifically methylates guanosine-37 in various tRNAs. In Thermus thermophilus (strain ATCC 27634 / DSM 579 / HB8), this protein is tRNA (guanine-N(1)-)-methyltransferase.